Consider the following 312-residue polypeptide: Olfactory receptor 8G50 (312 aa).

Over 1–28 (MAYSNQSRVTEFIISGLTNKPELQLPLF) the chain is Extracellular. The N-linked (GlcNAc...) asparagine glycan is linked to Asn-5. Residues 29 to 49 (LLFLGIYLFTVLGNLGMIILI) form a helical membrane-spanning segment. Topologically, residues 50–56 (LLSSHLH) are cytoplasmic. The helical transmembrane segment at 57–77 (TPMYFFLSSLSFIDLCYSTII) threads the bilayer. Residues 78–99 (TPKMLVNFVTTKNVISYQECMT) lie on the Extracellular side of the membrane. A disulfide bridge connects residues Cys-97 and Cys-189. The helical transmembrane segment at 100 to 120 (QLYFFIAFVISECHMLAAMAY) threads the bilayer. The Cytoplasmic portion of the chain corresponds to 121 to 143 (DRYVAICNPLLYNVTMSYQVCSW). The helical transmembrane segment at 144 to 164 (MVGGVYGMGFIGAAIHTFCML) threads the bilayer. Topologically, residues 165–204 (RVVFCKDNIINHYFCDLFPLMELACSSTYVNEVVLLSLSA) are extracellular. The helical transmembrane segment at 205 to 225 (FNIFIPTLTILGSYIFIIISI) threads the bilayer. The Cytoplasmic portion of the chain corresponds to 226–244 (LRIKSTEGRFKAFSTCSSH). The helical transmembrane segment at 245-265 (FSAVSVFFGSLAFMYLQPFSV) threads the bilayer. Residues 266–274 (SSKDKGKVS) are Extracellular-facing. The helical transmembrane segment at 275-292 (SVFYTTIVPMLNPMIYSL) threads the bilayer. Over 293 to 312 (RNRDVKLALNKLFQKKKFHV) the chain is Cytoplasmic.

This sequence belongs to the G-protein coupled receptor 1 family.

The protein localises to the cell membrane. Its function is as follows. Odorant receptor. The protein is Olfactory receptor 8G50 of Mus musculus (Mouse).